A 103-amino-acid polypeptide reads, in one-letter code: Large ribosomal subunit protein bL21 (103 aa).

It belongs to the bacterial ribosomal protein bL21 family. In terms of assembly, part of the 50S ribosomal subunit. Contacts protein L20.

Functionally, this protein binds to 23S rRNA in the presence of protein L20. This is Large ribosomal subunit protein bL21 from Mycobacterium sp. (strain JLS).